The primary structure comprises 545 residues: Membrane protein insertase YidC (545 aa).

6 helical membrane passes run 10 to 30 (AVYLSLFFIGIFMLLDDFLFS), 319 to 339 (LLYFLQVPMQLIMQIFYNVIP), 341 to 361 (WGLSIMFLTIVVRILIFPLTF), 407 to 427 (IGGCFPILLQLPVFFALYGLV), 467 to 487 (ILPFIMMITQLLSTIVSSNVS), and 502 to 522 (MPIMFFFILYDMPSGLLIYWI).

The protein belongs to the OXA1/ALB3/YidC family. Type 1 subfamily. As to quaternary structure, interacts with the Sec translocase complex via SecD. Specifically interacts with transmembrane segments of nascent integral membrane proteins during membrane integration.

The protein resides in the cell inner membrane. In terms of biological role, required for the insertion and/or proper folding and/or complex formation of integral membrane proteins into the membrane. Involved in integration of membrane proteins that insert both dependently and independently of the Sec translocase complex, as well as at least some lipoproteins. Aids folding of multispanning membrane proteins. The chain is Membrane protein insertase YidC from Borrelia duttonii (strain Ly).